A 556-amino-acid chain; its full sequence is Urease subunit alpha 1 (556 aa).

The Urease domain maps to 127 to 556; that stretch reads GAVDTHVHLL…SVSLNRLYFL (430 aa). Residues histidine 132, histidine 134, and lysine 212 each contribute to the Ni(2+) site. At lysine 212 the chain carries N6-carboxylysine. Histidine 214 is a substrate binding site. Residues histidine 241 and histidine 267 each contribute to the Ni(2+) site. The active-site Proton donor is histidine 315. Aspartate 355 contributes to the Ni(2+) binding site.

It belongs to the metallo-dependent hydrolases superfamily. Urease alpha subunit family. May form a heterohexamer of 3 UreC (alpha) and 3 UreAB (gamma/beta) subunits. May also form a heterotrimer of UreA (gamma), UreB (beta) and UreC (alpha) subunits. Three heterotrimers associate to form the active enzyme. Ni cation is required as a cofactor. Post-translationally, carboxylation allows a single lysine to coordinate two nickel ions.

The protein localises to the cytoplasm. It carries out the reaction urea + 2 H2O + H(+) = hydrogencarbonate + 2 NH4(+). It participates in nitrogen metabolism; urea degradation; CO(2) and NH(3) from urea (urease route): step 1/1. The protein is Urease subunit alpha 1 of Streptomyces avermitilis (strain ATCC 31267 / DSM 46492 / JCM 5070 / NBRC 14893 / NCIMB 12804 / NRRL 8165 / MA-4680).